A 1616-amino-acid polypeptide reads, in one-letter code: Replicase large subunit (1616 aa).

Residues F50–H458 are methyltransferase. An Alphavirus-like MT domain is found at T72–V281. The (+)RNA virus helicase ATP-binding domain maps to V801–R963. Positions L830–T1085 are helicase. G833–T840 contributes to the ATP binding site. One can recognise a (+)RNA virus helicase C-terminal domain in the interval R964 to Q1116. The RdRp catalytic domain occupies M1380–D1493.

It belongs to the ssRNA positive-strand viruses RNA-directed RNA polymerase family. As to quaternary structure, heterodimer of a large and a small subunit.

It catalyses the reaction RNA(n) + a ribonucleoside 5'-triphosphate = RNA(n+1) + diphosphate. The enzyme catalyses ATP + H2O = ADP + phosphate + H(+). Its function is as follows. Is an RNA-dependent RNA polymerase active in viral RNA replication. Is a methyltransferase active in RNA capping and an RNA helicase. Methyltransferase displays a cytoplasmic capping enzyme activity. This function is necessary since all viral RNAs are synthesized in the cytoplasm, and host capping enzymes are restricted to the nucleus. Helicase region probably exhibits NTPase and RNA unwinding activities (Potential). It also acts as a suppressor of RNA-mediated gene silencing, also known as post-transcriptional gene silencing (PTGS), a mechanism of plant viral defense that limits the accumulation of viral RNAs. May mediate silencing suppression through either inhibition of HEN1-mediated siRNA or siRNA demethylation. The sequence is that of Replicase large subunit from Nicotiana tabacum (Common tobacco).